We begin with the raw amino-acid sequence, 54 residues long: Ovomucoid (54 aa).

The Kazal-like domain occupies 4–54 (VDCSEYPKPACTMEHRPLCGSDNQTYDNKCNFCNAVVESNGTLTLSHFGKC). 3 cysteine pairs are disulfide-bonded: Cys-6-Cys-36, Cys-14-Cys-33, and Cys-22-Cys-54. Asn-43 is a glycosylation site (N-linked (GlcNAc...) asparagine).

It is found in the secreted. The chain is Ovomucoid from Guttera pucherani (Eastern crested guineafowl).